A 913-amino-acid chain; its full sequence is Calcium-activated chloride channel regulator 1 (913 aa).

Positions 1-21 are cleaved as a signal peptide; that stretch reads MGSFKSSVFILVLHLLEGALS. A metalloprotease domain region spans residues 46 to 199; the sequence is DETLIQQIKD…DIAGKNVVNH (154 aa). Zn(2+) is bound at residue His156. Residue Glu157 is part of the active site. Positions 160 and 167 each coordinate Zn(2+). One can recognise a VWFA domain in the interval 306 to 475; the sequence is IVCLVLDKSG…NGLIDAFGAL (170 aa). N-linked (GlcNAc...) asparagine glycans are attached at residues Asn503, Asn514, Asn770, Asn804, Asn810, Asn836, and Asn885.

Belongs to the CLCR family. Post-translationally, glycosylated. The translation product is autoproteolytically cleaved by the metalloprotease domain in the endoplasmic reticulum into a N-terminal and a C-terminal products that remain physically associated with each other. The cleavage is necessary for calcium-activated chloride channel (CaCC) activation activity. Expressed in mucin-producing cells in the respiratory and intestinal tracts, cutaneous sweat glands, and renal mucous glands (at protein level). Strong overexpression in the airways of horses with recurrent airway obstruction (at protein level).

It is found in the secreted. Its subcellular location is the extracellular space. Its function is as follows. May be involved in mediating calcium-activated chloride conductance. May play critical roles in goblet cell metaplasia, mucus hypersecretion, cystic fibrosis and AHR. May be involved in the regulation of mucus production and/or secretion by goblet cells. Involved in the regulation of tissue inflammation in the innate immune response. May play a role as a tumor suppressor. Induces MUC5AC. In Equus caballus (Horse), this protein is Calcium-activated chloride channel regulator 1 (CLCA1).